A 427-amino-acid polypeptide reads, in one-letter code: Glutamate-1-semialdehyde 2,1-aminomutase (427 aa).

Position 265 is an N6-(pyridoxal phosphate)lysine (K265).

Belongs to the class-III pyridoxal-phosphate-dependent aminotransferase family. HemL subfamily. In terms of assembly, homodimer. It depends on pyridoxal 5'-phosphate as a cofactor.

The protein resides in the cytoplasm. The enzyme catalyses (S)-4-amino-5-oxopentanoate = 5-aminolevulinate. It participates in porphyrin-containing compound metabolism; protoporphyrin-IX biosynthesis; 5-aminolevulinate from L-glutamyl-tRNA(Glu): step 2/2. This Burkholderia vietnamiensis (strain G4 / LMG 22486) (Burkholderia cepacia (strain R1808)) protein is Glutamate-1-semialdehyde 2,1-aminomutase.